We begin with the raw amino-acid sequence, 125 residues long: Large ribosomal subunit protein bL12 (125 aa).

Belongs to the bacterial ribosomal protein bL12 family. Homodimer. Part of the ribosomal stalk of the 50S ribosomal subunit. Forms a multimeric L10(L12)X complex, where L10 forms an elongated spine to which 2 to 4 L12 dimers bind in a sequential fashion. Binds GTP-bound translation factors.

Its function is as follows. Forms part of the ribosomal stalk which helps the ribosome interact with GTP-bound translation factors. Is thus essential for accurate translation. The polypeptide is Large ribosomal subunit protein bL12 (Campylobacter concisus (strain 13826)).